Here is a 1115-residue protein sequence, read N- to C-terminus: Calcium-transporting ATPase PAT1 (1115 aa).

The Stromal segment spans residues 1–99 (MTGSHEMESI…SIVLDALSDH (99 aa)). Residues 100-120 (ILILLIVAAVVSIVLGSIDYT) form a helical membrane-spanning segment. The Lumenal portion of the chain corresponds to 121–126 (SDHPET). The chain crosses the membrane as a helical span at residues 127 to 147 (GWIDGVAILVAVILVVGITSL). Over 148–235 (NDFKNQARFR…KGQPQDNMDP (88 aa)) the chain is Stromal. The helical transmembrane segment at 236-256 (FLISGSMVIEGFGTMLVTAVG) threads the bilayer. Over 257 to 287 (VNSFNGKTMMGLRVASEDTPLQMKLSVLASR) the chain is Lumenal. Residues 288–308 (IGYFGMGAAILMLLIAIPKYF) form a helical membrane-spanning segment. Residues 309–328 (IQRKVHDIEITREDAQPIVQ) lie on the Stromal side of the membrane. The helical transmembrane segment at 329-349 (LVISAITIVVVAVPEGLPLAV) threads the bilayer. At 350–735 (TMALAYGMMK…GRNIYDAICK (386 aa)) the chain is on the lumenal side. Asp-385 serves as the catalytic 4-aspartylphosphate intermediate. 2 residues coordinate Mg(2+): Asp-678 and Asp-682. The helical transmembrane segment at 736–756 (FLQFQLTVNVVAVTVAFIGTL) threads the bilayer. Over 757-832 (TSDVVEDKDN…GKNAPLITRS (76 aa)) the chain is Stromal. Positions 762 to 784 (EDKDNSSSSGSADKVTEEEPRQG) are disordered. Residues 833 to 853 (MWKNIIGQAALQLAILFTILY) traverse the membrane as a helical segment. Residues 854-873 (QGHNIFQHFVPQAHGPIIKN) are Lumenal-facing. A helical transmembrane segment spans residues 874–894 (GLHHYTLVFNCFVFLQLFNEI). Over 895–913 (NARVLGSRTNPFKNFFNNP) the chain is Stromal. The helical transmembrane segment at 914 to 934 (IFIAVMIFTLGVQIIFVTFGG) threads the bilayer. Residues 935 to 943 (SATSTDSLY) are Lumenal-facing. Residues 944 to 964 (IVEWICCVVVGAISLPVGLLL) traverse the membrane as a helical segment. At 965–1115 (RKIPIREPVV…LHLPVNQINN (151 aa)) the chain is on the stromal side. The tract at residues 984–1056 (AVYTSPSPNP…IPSSSSNLVN (73 aa)) is disordered. Low complexity predominate over residues 1040 to 1053 (NDNINTPIPSSSSN).

This sequence belongs to the cation transport ATPase (P-type) (TC 3.A.3) family. Type IIB subfamily.

The protein localises to the contractile vacuole membrane. Its subcellular location is the cell membrane. The enzyme catalyses Ca(2+)(in) + ATP + H2O = Ca(2+)(out) + ADP + phosphate + H(+). Calcium ATPase involved in Ca(2+) homeostasis as a component of the contractile vacuole complex. This is Calcium-transporting ATPase PAT1 (patA) from Dictyostelium discoideum (Social amoeba).